A 134-amino-acid polypeptide reads, in one-letter code: Protein LctB (134 aa).

This is Protein LctB (lctB) from Geobacillus stearothermophilus (Bacillus stearothermophilus).